Consider the following 101-residue polypeptide: MAKKSKIAKNEQRKEVVARFAERRNELKAIIKNPNTSDEDRLDAQFELNRQPRDASPVRVRNRDSRDGRPRGFLRKFGVSRVRMREMAHRGELPGVRKSSW.

The tract at residues 46-72 (FELNRQPRDASPVRVRNRDSRDGRPRG) is disordered. Over residues 61 to 70 (RNRDSRDGRP) the composition is skewed to basic and acidic residues.

This sequence belongs to the universal ribosomal protein uS14 family. As to quaternary structure, part of the 30S ribosomal subunit. Contacts proteins S3 and S10.

Its function is as follows. Binds 16S rRNA, required for the assembly of 30S particles and may also be responsible for determining the conformation of the 16S rRNA at the A site. This is Small ribosomal subunit protein uS14 from Corynebacterium diphtheriae (strain ATCC 700971 / NCTC 13129 / Biotype gravis).